Here is a 94-residue protein sequence, read N- to C-terminus: MRELYLVIAYDTPDDRRRARLAKLLKGFGERRQYSVFEARLTREQWAHLKGKLEALVNKEEDVLAVYFLPPEAVGRTWRIGHEGLKRLEDPDFV.

Asp-11 serves as a coordination point for Mg(2+).

This sequence belongs to the CRISPR-associated endoribonuclease Cas2 protein family. In terms of assembly, homodimer, forms a heterotetramer with a Cas1 homodimer. The cofactor is Mg(2+).

CRISPR (clustered regularly interspaced short palindromic repeat), is an adaptive immune system that provides protection against mobile genetic elements (viruses, transposable elements and conjugative plasmids). CRISPR clusters contain sequences complementary to antecedent mobile elements and target invading nucleic acids. CRISPR clusters are transcribed and processed into CRISPR RNA (crRNA). Functions as a ssRNA-specific endoribonuclease. Involved in the integration of spacer DNA into the CRISPR cassette. The sequence is that of CRISPR-associated endoribonuclease Cas2 from Thermus thermophilus (strain ATCC 27634 / DSM 579 / HB8).